We begin with the raw amino-acid sequence, 346 residues long: Phosphoribosylformylglycinamidine cyclo-ligase (346 aa).

Belongs to the AIR synthase family.

It is found in the cytoplasm. It carries out the reaction 2-formamido-N(1)-(5-O-phospho-beta-D-ribosyl)acetamidine + ATP = 5-amino-1-(5-phospho-beta-D-ribosyl)imidazole + ADP + phosphate + H(+). Its pathway is purine metabolism; IMP biosynthesis via de novo pathway; 5-amino-1-(5-phospho-D-ribosyl)imidazole from N(2)-formyl-N(1)-(5-phospho-D-ribosyl)glycinamide: step 2/2. The chain is Phosphoribosylformylglycinamidine cyclo-ligase from Photobacterium profundum (strain SS9).